We begin with the raw amino-acid sequence, 190 residues long: Small ribosomal subunit protein uS4c (190 aa).

The 61-residue stretch at Arg92–Pro152 folds into the S4 RNA-binding domain.

The protein belongs to the universal ribosomal protein uS4 family. As to quaternary structure, part of the 30S ribosomal subunit. Contacts protein S5. The interaction surface between S4 and S5 is involved in control of translational fidelity.

Its subcellular location is the plastid. It localises to the chloroplast. One of the primary rRNA binding proteins, it binds directly to 16S rRNA where it nucleates assembly of the body of the 30S subunit. Functionally, with S5 and S12 plays an important role in translational accuracy. This Cyanidioschyzon merolae (strain NIES-3377 / 10D) (Unicellular red alga) protein is Small ribosomal subunit protein uS4c (rps4).